The following is a 302-amino-acid chain: tRNA pseudouridine synthase B (302 aa).

Asp45 serves as the catalytic Nucleophile.

The protein belongs to the pseudouridine synthase TruB family. Type 1 subfamily.

The catalysed reaction is uridine(55) in tRNA = pseudouridine(55) in tRNA. Functionally, responsible for synthesis of pseudouridine from uracil-55 in the psi GC loop of transfer RNAs. This is tRNA pseudouridine synthase B from Francisella tularensis subsp. holarctica (strain FTNF002-00 / FTA).